Here is a 407-residue protein sequence, read N- to C-terminus: Carbamoyl phosphate synthase small chain (407 aa).

The segment at 1–205 is CPSase; the sequence is MTETTPKTAP…LQDGYGEQDA (205 aa). 3 residues coordinate L-glutamine: Ser-60, Gly-257, and Gly-259. The region spanning 209–397 is the Glutamine amidotransferase type-1 domain; that stretch reads HVVALDFGVK…INLIRERKGQ (189 aa). The active-site Nucleophile is Cys-286. The L-glutamine site is built by Leu-287, Gln-290, Asn-328, Gly-330, and Phe-331. Catalysis depends on residues His-370 and Glu-372.

Belongs to the CarA family. Composed of two chains; the small (or glutamine) chain promotes the hydrolysis of glutamine to ammonia, which is used by the large (or ammonia) chain to synthesize carbamoyl phosphate. Tetramer of heterodimers (alpha,beta)4.

The catalysed reaction is hydrogencarbonate + L-glutamine + 2 ATP + H2O = carbamoyl phosphate + L-glutamate + 2 ADP + phosphate + 2 H(+). It carries out the reaction L-glutamine + H2O = L-glutamate + NH4(+). Its pathway is amino-acid biosynthesis; L-arginine biosynthesis; carbamoyl phosphate from bicarbonate: step 1/1. It functions in the pathway pyrimidine metabolism; UMP biosynthesis via de novo pathway; (S)-dihydroorotate from bicarbonate: step 1/3. Functionally, small subunit of the glutamine-dependent carbamoyl phosphate synthetase (CPSase). CPSase catalyzes the formation of carbamoyl phosphate from the ammonia moiety of glutamine, carbonate, and phosphate donated by ATP, constituting the first step of 2 biosynthetic pathways, one leading to arginine and/or urea and the other to pyrimidine nucleotides. The small subunit (glutamine amidotransferase) binds and cleaves glutamine to supply the large subunit with the substrate ammonia. This Brucella canis (strain ATCC 23365 / NCTC 10854 / RM-666) protein is Carbamoyl phosphate synthase small chain.